The chain runs to 3859 residues: Transformation/transcription domain-associated protein (3859 aa).

Alanine 2 is modified (N-acetylalanine). Over residues 491-526 (PAAPGPAPSPAPVPAPPPPPPPPPPATPVTPAPVPP) the composition is skewed to pro residues. A disordered region spans residues 491-541 (PAAPGPAPSPAPVPAPPPPPPPPPPATPVTPAPVPPFEKQGEKDKEDKQTF). A compositionally biased stretch (basic and acidic residues) spans 529 to 539 (KQGEKDKEDKQ). Serine 1628 carries the phosphoserine modification. The segment at 2010–2388 (SEVVIKWELQ…SPMAANQTPT (379 aa)) is interaction with TP53. Residues 2023–2044 (DQQPDSDMDPNSSGEGVNSVSS) are disordered. Positions 2033–2044 (NSSGEGVNSVSS) are enriched in low complexity. The Bipartite nuclear localization signal signature appears at 2047–2062 (KRGLSVDSAQEVKRFR). Serine 2051 and serine 2077 each carry phosphoserine. Residue lysine 2543 forms a Glycyl lysine isopeptide (Lys-Gly) (interchain with G-Cter in SUMO2) linkage. Basic and acidic residues predominate over residues 2543–2554 (KQEPRERENSES). Residues 2543 to 2578 (KQEPRERENSESKEEDVEIDIELAPGDQTSTPKTKE) form a disordered region. One can recognise an FAT domain in the interval 2692-3275 (VLKYLGKTHN…YFPIRTLYLT (584 aa)). Lysine 3078 carries the N6-acetyllysine modification. The 324-residue stretch at 3500-3823 (MPRVEIVQKH…AVTAIMTRLH (324 aa)) folds into the PI3K/PI4K catalytic domain. The G-loop stretch occupies residues 3506-3512 (VQKHNTA). A catalytic loop region spans residues 3687 to 3695 (HLNRLNPEM). Residues 3707–3732 (VAYFRFDINDATGDLDANRPVPFRLT) form an activation loop region. The FATC domain occupies 3827–3859 (QFEGGESKVNTLVAAANSLDNLCRMDPAWHPWL).

The protein belongs to the PI3/PI4-kinase family. TRA1 subfamily. As to quaternary structure, interacts with MYC, E2F1 and E2F4 transcription factors. Interacts directly with p53/TP53. Interacts with GCN5L2. Component of various HAT complexes. Component of the PCAF complex, at least composed of TADA2L/ADA2, SUPT3H, TADA3L/ADA3, TAF5L/PAF65-beta, TAF6L/PAF65-alpha, TAF10/TAFII30, TAF12/TAFII20, TAF9/TAFII31 and TRRAP. Component of the TFTC-HAT complex, at least composed of TAF5L, TAF6L, TADA3L, SUPT3H/SPT3, TAF2/TAFII150, TAF4/TAFII135, TAF5/TAFII100, GCN5L2/GCN5, TAF10 and TRRAP. Component of the NuA4 histone acetyltransferase complex which contains the catalytic subunit KAT5/TIP60 and the subunits EP400, TRRAP/PAF400, BRD8/SMAP, EPC1, DMAP1/DNMAP1, RUVBL1/TIP49, RUVBL2, ING3, actin, ACTL6A/BAF53A, MORF4L1/MRG15, MORF4L2/MRGX, MRGBP, YEATS4/GAS41, VPS72/YL1 and MEAF6. Component of the STAGA complex, at least composed of SUPT3H, GCN5L2, SUPT7L, TAF5L, TAF6L, TADA3L, TAD1L, TAF10, TAF12, TRRAP and TAF9. The STAGA core complex is associated with a subcomplex required for histone deubiquitination composed of ATXN7L3, ENY2 and USP22. Component of the BAF53 complex, at least composed of BAF53A, RUVBL1, SMARCA4/BRG1, and TRRAP, which preferentially acetylates histone H4 (and H2A) within nucleosomes. Interacts with NPAT. Interaction with TELO2 and TTI1. Component of a SWR1-like complex.

Its subcellular location is the nucleus. In terms of biological role, adapter protein, which is found in various multiprotein chromatin complexes with histone acetyltransferase activity (HAT), which gives a specific tag for epigenetic transcription activation. Component of the NuA4 histone acetyltransferase complex which is responsible for acetylation of nucleosomal histones H4 and H2A. Plays a central role in MYC transcription activation, and also participates in cell transformation by MYC. Required for p53/TP53-, E2F1- and E2F4-mediated transcription activation. Also involved in transcription activation mediated by the adenovirus E1A, a viral oncoprotein that deregulates transcription of key genes. Probably acts by linking transcription factors such as E1A, MYC or E2F1 to HAT complexes such as STAGA thereby allowing transcription activation. Probably not required in the steps following histone acetylation in processes of transcription activation. May be required for the mitotic checkpoint and normal cell cycle progression. Component of a SWR1-like complex that specifically mediates the removal of histone H2A.Z/H2AZ1 from the nucleosome. May play a role in the formation and maintenance of the auditory system. This chain is Transformation/transcription domain-associated protein (TRRAP), found in Homo sapiens (Human).